A 439-amino-acid chain; its full sequence is Xylose isomerase (439 aa).

Catalysis depends on residues H100 and D103. 7 residues coordinate Mg(2+): E231, E267, H270, D295, D306, D308, and D338.

The protein belongs to the xylose isomerase family. Homotetramer. It depends on Mg(2+) as a cofactor.

Its subcellular location is the cytoplasm. The catalysed reaction is alpha-D-xylose = alpha-D-xylulofuranose. The chain is Xylose isomerase from Rhodopirellula baltica (strain DSM 10527 / NCIMB 13988 / SH1).